Consider the following 339-residue polypeptide: Transmembrane protein 120B (339 aa).

Residues 1 to 77 (MSGQLERCER…ASREEAELVQ (77 aa)) adopt a coiled-coil conformation. Transmembrane regions (helical) follow at residues 102–124 (GLYL…AKFA), 132–152 (FKLY…FFLH), 159–179 (VFNF…SILI), 187–207 (GWWV…LTWP), 270–290 (FLLP…VTLF), and 302–322 (QVFV…LTTL).

It belongs to the TMEM120 family. Heterooligomer with TMEM120A.

The protein resides in the nucleus inner membrane. In terms of biological role, necessary for efficient adipogenesis. Does not show ion channel activity. The protein is Transmembrane protein 120B (TMEM120B) of Bos taurus (Bovine).